A 120-amino-acid chain; its full sequence is NADH dehydrogenase [ubiquinone] 1 subunit C2 (120 aa).

At Met1 the chain carries N-acetylmethionine. Residues 57 to 76 (GLHRQLLYITSFVFVGYYLL) traverse the membrane as a helical segment.

Belongs to the complex I NDUFC2 subunit family. In terms of assembly, complex I is composed of 45 different subunits. Interacts with TMEM242. There is a minor unacetylated form of subunit B14.5b.

Its subcellular location is the mitochondrion inner membrane. Its function is as follows. Accessory subunit of the mitochondrial membrane respiratory chain NADH dehydrogenase (Complex I), that is believed not to be involved in catalysis but required for the complex assembly. Complex I functions in the transfer of electrons from NADH to the respiratory chain. The immediate electron acceptor for the enzyme is believed to be ubiquinone. This chain is NADH dehydrogenase [ubiquinone] 1 subunit C2, found in Bos taurus (Bovine).